Consider the following 421-residue polypeptide: MGLPPLLSLPSNSAPRSLGRVETPPEVVDFMVSLAEAPRGGRVLEPACAHGPFLRAFREAHGTAYRFVGVEIDPKALDLPPWAEGILADFLLWEPGEAFDLILGNPPYGIVGEASKYPIHVFKAVKDLYKKAFSTWKGKYNLYGAFLEKAVRLLKPGGVLVFVVPATWLVLEDFALLREFLAREGKTSVYYLGEVFPQKKVSAVVIRFQKSGKGLSLWDTQESESGFTPILWAEYPHWEGEIIRFETEETRKLEISGMPLGDLFHIRFAARSPEFKKHPAVRKEPGPGLVPVLTGRNLKPGWVDYEKNHSGLWMPKERAKELRDFYATPHLVVAHTKGTRVVAAWDERAYPWREEFHLLPKEGVRLDPSSLVQWLNSEAMQKHVRTLYRDFVPHLTLRMLERLPVRREYGFHTSPESARNF.

A compositionally biased stretch (low complexity) spans 1–18 (MGLPPLLSLPSNSAPRSL). The interval 1-20 (MGLPPLLSLPSNSAPRSLGR) is disordered. S-adenosyl-L-methionine contacts are provided by residues Thr23, 45–48 (EPAC), Glu71, Asp89, and Pro107.

Belongs to the N(4)/N(6)-methyltransferase family.

It carries out the reaction a 2'-deoxyadenosine in DNA + S-adenosyl-L-methionine = an N(6)-methyl-2'-deoxyadenosine in DNA + S-adenosyl-L-homocysteine + H(+). Functionally, a gamma subtype methylase that recognizes the double-stranded sequence 5'-TCGA-3', methylates A-4 on both strands and protects the DNA from cleavage by the TaqI endonuclease. This chain is Type II methyltransferase M.TaqI (taqIM), found in Thermus aquaticus.